Reading from the N-terminus, the 500-residue chain is L-arabinose isomerase (500 aa).

Mn(2+) is bound by residues E306, E333, H350, and H450.

It belongs to the arabinose isomerase family. In terms of assembly, homohexamer. Mn(2+) is required as a cofactor.

The catalysed reaction is beta-L-arabinopyranose = L-ribulose. The protein operates within carbohydrate degradation; L-arabinose degradation via L-ribulose; D-xylulose 5-phosphate from L-arabinose (bacterial route): step 1/3. Its function is as follows. Catalyzes the conversion of L-arabinose to L-ribulose. The chain is L-arabinose isomerase from Shigella flexneri.